The sequence spans 470 residues: Glutamate--tRNA ligase (470 aa).

The short motif at 12–22 (PSPTGIFHVGG) is the 'HIGH' region element. Cysteine 103, cysteine 105, cysteine 125, and aspartate 127 together coordinate Zn(2+). The 'KMSKS' region signature appears at 236–240 (KLSKR). Lysine 239 contacts ATP.

Belongs to the class-I aminoacyl-tRNA synthetase family. Glutamate--tRNA ligase type 1 subfamily. As to quaternary structure, monomer. Requires Zn(2+) as cofactor.

It is found in the cytoplasm. It catalyses the reaction tRNA(Glu) + L-glutamate + ATP = L-glutamyl-tRNA(Glu) + AMP + diphosphate. Its function is as follows. Catalyzes the attachment of glutamate to tRNA(Glu) in a two-step reaction: glutamate is first activated by ATP to form Glu-AMP and then transferred to the acceptor end of tRNA(Glu). This Frankia alni (strain DSM 45986 / CECT 9034 / ACN14a) protein is Glutamate--tRNA ligase.